The chain runs to 330 residues: MAAVDSFYLLYREIARSCNCYMEALALVGAWYTARKSITVICDFYSLIRLHFIPRLGSRADLIKQYGRWAVVSGATDGIGKAYAEELASRGLNIILISRNEEKLQVVAKDIADTYKVETDIIVADFSSGREIYLPIREALKDKDVGILVNNVGVFYPYPQYFTQLSEDKLWDIINVNIAAASLMVHVVLPGMVERKKGAIVTISSGSCCKPTPQLAAFSASKAYLDHFSRALQYEYASKGIFVQSLIPFYVATSMTAPSNFLHRCSWLVPSPKVYAHHAVSTLGISKRTTGYWSHSIQFLFAQYMPEWLWVWGANILNRSLRKEALSCTA.

Ala2 is subject to N-acetylalanine. Positions 2–82 are required for mitochondria translocation; it reads AAVDSFYLLY…SGATDGIGKA (81 aa). Residues 74-80, Asp125, and Lys222 contribute to the NADP(+) site; that span reads GATDGIG.

This sequence belongs to the short-chain dehydrogenases/reductases (SDR) family. 17-beta-HSD 3 subfamily. As to quaternary structure, interacts with STYXL1. As to expression, highly expressed in testis and ovary. Also detected in thyroid, spinal cord, adrenal gland, heart, placenta, skeletal muscle, small intestine, colon, spleen, prostate and pancreas.

It localises to the mitochondrion. This chain is Inactive hydroxysteroid dehydrogenase-like protein 1 (HSDL1), found in Homo sapiens (Human).